We begin with the raw amino-acid sequence, 95 residues long: Large ribosomal subunit protein uL23 (95 aa).

It belongs to the universal ribosomal protein uL23 family. As to quaternary structure, part of the 50S ribosomal subunit. Contacts protein L29, and trigger factor when it is bound to the ribosome.

Functionally, one of the early assembly proteins it binds 23S rRNA. One of the proteins that surrounds the polypeptide exit tunnel on the outside of the ribosome. Forms the main docking site for trigger factor binding to the ribosome. The chain is Large ribosomal subunit protein uL23 from Pelotomaculum thermopropionicum (strain DSM 13744 / JCM 10971 / SI).